The following is an 81-amino-acid chain: MNPLISAASVIAAGLSVGLASIGPGIGQGTAAGQAVEGIARQPEAEGKIRGTLLLSLAFMEALTIYGLVVALALLFANPFV.

Helical transmembrane passes span 7–27 (AASV…PGIG) and 57–77 (LAFM…LLFA).

This sequence belongs to the ATPase C chain family. F-type ATPases have 2 components, F(1) - the catalytic core - and F(0) - the membrane proton channel. F(1) has five subunits: alpha(3), beta(3), gamma(1), delta(1), epsilon(1). F(0) has four main subunits: a(1), b(1), b'(1) and c(10-14). The alpha and beta chains form an alternating ring which encloses part of the gamma chain. F(1) is attached to F(0) by a central stalk formed by the gamma and epsilon chains, while a peripheral stalk is formed by the delta, b and b' chains.

It localises to the plastid. The protein resides in the chloroplast thylakoid membrane. Its function is as follows. F(1)F(0) ATP synthase produces ATP from ADP in the presence of a proton or sodium gradient. F-type ATPases consist of two structural domains, F(1) containing the extramembraneous catalytic core and F(0) containing the membrane proton channel, linked together by a central stalk and a peripheral stalk. During catalysis, ATP synthesis in the catalytic domain of F(1) is coupled via a rotary mechanism of the central stalk subunits to proton translocation. In terms of biological role, key component of the F(0) channel; it plays a direct role in translocation across the membrane. A homomeric c-ring of between 10-14 subunits forms the central stalk rotor element with the F(1) delta and epsilon subunits. The chain is ATP synthase subunit c, chloroplastic from Cryptomeria japonica (Japanese cedar).